Here is a 127-residue protein sequence, read N- to C-terminus: Fluoride-specific ion channel FluC (127 aa).

Helical transmembrane passes span 3–23 (LVFL…YFVG), 38–58 (LGTF…GHLA), 67–87 (FGIF…SYGL), and 102–122 (ISYV…GWFL). Na(+) contacts are provided by Gly77 and Thr80.

The protein belongs to the fluoride channel Fluc/FEX (TC 1.A.43) family.

It is found in the cell inner membrane. It catalyses the reaction fluoride(in) = fluoride(out). With respect to regulation, na(+) is not transported, but it plays an essential structural role and its presence is essential for fluoride channel function. Its function is as follows. Fluoride-specific ion channel. Important for reducing fluoride concentration in the cell, thus reducing its toxicity. The sequence is that of Fluoride-specific ion channel FluC from Helicobacter acinonychis (strain Sheeba).